Reading from the N-terminus, the 448-residue chain is Exodeoxyribonuclease 7 large subunit (448 aa).

The protein belongs to the XseA family. As to quaternary structure, heterooligomer composed of large and small subunits.

It is found in the cytoplasm. The enzyme catalyses Exonucleolytic cleavage in either 5'- to 3'- or 3'- to 5'-direction to yield nucleoside 5'-phosphates.. In terms of biological role, bidirectionally degrades single-stranded DNA into large acid-insoluble oligonucleotides, which are then degraded further into small acid-soluble oligonucleotides. This Shewanella baltica (strain OS195) protein is Exodeoxyribonuclease 7 large subunit.